The chain runs to 239 residues: Probable transcriptional regulatory protein Sca_0317 (239 aa).

Belongs to the TACO1 family. YeeN subfamily.

The protein localises to the cytoplasm. This is Probable transcriptional regulatory protein Sca_0317 from Staphylococcus carnosus (strain TM300).